The sequence spans 120 residues: uncharacterized protein (120 aa).

The first 22 residues, Met1–Ala22, serve as a signal peptide directing secretion. The Extracellular portion of the chain corresponds to Phe23–Ser59. The chain crosses the membrane as a helical span at residues Leu60–Leu80. The Cytoplasmic portion of the chain corresponds to Ser81–Asn120.

The protein resides in the membrane. This is an uncharacterized protein from Schizosaccharomyces pombe (strain 972 / ATCC 24843) (Fission yeast).